We begin with the raw amino-acid sequence, 482 residues long: 2-succinylbenzoate--CoA ligase (482 aa).

It belongs to the ATP-dependent AMP-binding enzyme family. MenE subfamily.

The catalysed reaction is 2-succinylbenzoate + ATP + CoA = 2-succinylbenzoyl-CoA + AMP + diphosphate. It participates in quinol/quinone metabolism; 1,4-dihydroxy-2-naphthoate biosynthesis; 1,4-dihydroxy-2-naphthoate from chorismate: step 5/7. The protein operates within quinol/quinone metabolism; menaquinone biosynthesis. Converts 2-succinylbenzoate (OSB) to 2-succinylbenzoyl-CoA (OSB-CoA). The sequence is that of 2-succinylbenzoate--CoA ligase from Bacillus anthracis (strain A0248).